We begin with the raw amino-acid sequence, 407 residues long: Phosphopentomutase (407 aa).

Mn(2+) is bound by residues aspartate 10, aspartate 306, histidine 311, aspartate 347, histidine 348, and histidine 359.

Belongs to the phosphopentomutase family. Requires Mn(2+) as cofactor.

The protein localises to the cytoplasm. The enzyme catalyses 2-deoxy-alpha-D-ribose 1-phosphate = 2-deoxy-D-ribose 5-phosphate. It carries out the reaction alpha-D-ribose 1-phosphate = D-ribose 5-phosphate. Its pathway is carbohydrate degradation; 2-deoxy-D-ribose 1-phosphate degradation; D-glyceraldehyde 3-phosphate and acetaldehyde from 2-deoxy-alpha-D-ribose 1-phosphate: step 1/2. In terms of biological role, isomerase that catalyzes the conversion of deoxy-ribose 1-phosphate (dRib-1-P) and ribose 1-phosphate (Rib-1-P) to deoxy-ribose 5-phosphate (dRib-5-P) and ribose 5-phosphate (Rib-5-P), respectively. This chain is Phosphopentomutase, found in Edwardsiella ictaluri (strain 93-146).